Consider the following 377-residue polypeptide: Acetylornithine aminotransferase (377 aa).

Pyridoxal 5'-phosphate-binding positions include 94–95 and Phe121; that span reads GT. Arg124 serves as a coordination point for N(2)-acetyl-L-ornithine. 206-209 is a pyridoxal 5'-phosphate binding site; sequence DEIQ. N6-(pyridoxal phosphate)lysine is present on Lys235. Ser263 serves as a coordination point for N(2)-acetyl-L-ornithine. Residue Thr264 coordinates pyridoxal 5'-phosphate.

It belongs to the class-III pyridoxal-phosphate-dependent aminotransferase family. ArgD subfamily. As to quaternary structure, homodimer. Pyridoxal 5'-phosphate serves as cofactor.

Its subcellular location is the cytoplasm. It carries out the reaction N(2)-acetyl-L-ornithine + 2-oxoglutarate = N-acetyl-L-glutamate 5-semialdehyde + L-glutamate. It participates in amino-acid biosynthesis; L-arginine biosynthesis; N(2)-acetyl-L-ornithine from L-glutamate: step 4/4. This is Acetylornithine aminotransferase from Lactococcus lactis subsp. lactis (strain IL1403) (Streptococcus lactis).